Consider the following 1854-residue polypeptide: PKS-NRPS hybrid synthetase ATPKS (1854 aa).

The interval 24–423 (FDQTQTRYSP…GRADTQIKIR (400 aa)) is adenylation (A) domain. The Carrier 1 domain occupies 523–598 (IPASTLTQQL…NLAAYLSDQT (76 aa)). Ser-558 carries the post-translational modification O-(pantetheine 4'-phosphoryl)serine. The Ketosynthase family 3 (KS3) domain maps to 617-1049 (GEDIAVISMA…GTNAHAIIEE (433 aa)). Active-site for beta-ketoacyl synthase activity residues include Cys-791, His-926, and His-967. Positions 1162-1496 (LFSGQGTERA…SLSDLHIRKV (335 aa)) are malonyl-CoA:ACP transacylase (MAT) domain. The tract at residues 1536 to 1556 (KSSGQPSGQSPSGCPQPTGQI) is disordered. Positions 1537–1555 (SSGQPSGQSPSGCPQPTGQ) are enriched in low complexity. One can recognise a Carrier 2 domain in the interval 1776–1851 (MMLQGLVRGI…SLSDALQKQV (76 aa)). Ser-1811 carries the O-(pantetheine 4'-phosphoryl)serine modification.

The protein in the C-terminal section; belongs to the NRP synthetase family.

Its pathway is secondary metabolite biosynthesis. PKS-NRPS hybrid synthetase; part of the gene cluster that mediates the biosynthesis of pyrophen and campyrone B, which represent a class of fungal amino acid-derived alpha-pyrone natural products. The first step of pyrophen biosynthesis is catalyzed by the PKS-NRPS hybrid synthetase ATPKS that uptakes and condensates L-phenylalanine and malonyl-CoA in order to produce desmethyldesacetylpyrophen. Although the A domain does not discriminate between 2 enantiomeric phenylalanines, the downstream KS domain must play a gate keeping role to stereoselectively accept the L-phenylalanyl-S-phosphopantetheine (Ppant)-T domain intermediate for chain elongation. The resulting amino acid derived diketide is off-loaded through lactonization to yield the alpha-pyrone intermediate desmethyldesacetylpyrophen. The cluster-specific O-methyltransferase (OMT) then methylates desmethyldesacetylpyrophen to desacetylpyrophen, which is further acetylated to pyrophen by an endogenous yet unidentified N-acetyltransferase. ATPKS has relaxed substrate specificity to activate and extend branched-chain amino acid L-leucine to produce small amounts of campyrone B. This Aspergillus niger (strain ATCC 1015 / CBS 113.46 / FGSC A1144 / LSHB Ac4 / NCTC 3858a / NRRL 328 / USDA 3528.7) protein is PKS-NRPS hybrid synthetase ATPKS.